The primary structure comprises 86 residues: Acyl-CoA-binding protein homolog (86 aa).

Residues 2 to 86 (VSEQFNAAAE…FVEGLVAKYA (85 aa)) form the ACB domain. Residues Lys-14, 29 to 33 (YALFK), Lys-51, Lys-55, and Tyr-74 contribute to the an acyl-CoA site.

Belongs to the ACBP family. Expressed in larval and pupal brains. In adults, expressed in cardia, part of the Malpighian tubules, fat body, and gametes of both sexes.

In terms of biological role, binds medium- and long-chain acyl-CoA esters with very high affinity and may function as an intracellular carrier of acyl-CoA esters. May be involved in energy metabolism in a manner that depends on the substrate used for energy production. Dbi and its metabolites are involved in the regulation of multiple biological processes. The sequence is that of Acyl-CoA-binding protein homolog from Drosophila melanogaster (Fruit fly).